A 302-amino-acid polypeptide reads, in one-letter code: MRDYSKEIKSWAAELGFDFCGISAADFLEEEAPRLERWLNRNYHGKMAYMANHFDKRLDPRKLVDGAKSVVSLLLNYYPEEPLDASPYKISKYAYGKDYHYVIKDKLKLLFERIQKEIGEVGGRIFVDSAPVMDKIWAKKAGLGWVGKNSNLINRKMGSFFFIAELILDLPLQADGPIRDYCGTCTACIDACPTDAITPYEVDGSKCISYLTIELKDQIPNEFKGKMENWIFGCDICQDVCPWNSFARPHSTEEFYPNENLKTFQDWDEITSEIFSHLFKKSAVERTKLEGLKRNIAFVKEV.

The Proton donor role is filled by Asp-128. Positions 170 to 202 (LPLQADGPIRDYCGTCTACIDACPTDAITPYEV) constitute a 4Fe-4S ferredoxin-type 1 domain. Residues Cys-182, Cys-185, Cys-188, Cys-192, Cys-207, Cys-234, Cys-237, and Cys-241 each contribute to the [4Fe-4S] cluster site. The 31-residue stretch at 221 to 251 (NEFKGKMENWIFGCDICQDVCPWNSFARPHS) folds into the 4Fe-4S ferredoxin-type 2 domain.

Belongs to the QueG family. In terms of assembly, monomer. Cob(II)alamin is required as a cofactor. The cofactor is [4Fe-4S] cluster.

The protein resides in the cytoplasm. The enzyme catalyses epoxyqueuosine(34) in tRNA + AH2 = queuosine(34) in tRNA + A + H2O. It participates in tRNA modification; tRNA-queuosine biosynthesis. Its function is as follows. Catalyzes the conversion of epoxyqueuosine (oQ) to queuosine (Q), which is a hypermodified base found in the wobble positions of tRNA(Asp), tRNA(Asn), tRNA(His) and tRNA(Tyr). The sequence is that of Epoxyqueuosine reductase from Leadbetterella byssophila (strain DSM 17132 / JCM 16389 / KACC 11308 / NBRC 106382 / 4M15).